The following is a 161-amino-acid chain: MLSPKRTKFRKQQRGRMRGVATRGNKIAFGQFALQAQDCGWVTSRQIEASRRAMTRYVKRGGQIWIRIFPDKPVTMRPAETRMGSGKGNPEFWVAVVKPGRILFEMGGDEITETIAKEAMRLAQYKLPVKTKFISLDEDLNKGNYKPAKTPVTADDSESSS.

Residues 140–161 (LNKGNYKPAKTPVTADDSESSS) form a disordered region.

Belongs to the universal ribosomal protein uL16 family. As to quaternary structure, part of the 50S ribosomal subunit.

Its function is as follows. Binds 23S rRNA and is also seen to make contacts with the A and possibly P site tRNAs. In Prochlorococcus marinus (strain NATL1A), this protein is Large ribosomal subunit protein uL16.